The sequence spans 1072 residues: Carbamoyl phosphate synthase large chain (1072 aa).

The interval Met1–Glu401 is carboxyphosphate synthetic domain. The ATP site is built by Arg129, Arg169, Gly175, Gly176, Lys208, Ile210, Glu215, Gly241, Val242, His243, Gln284, and Glu298. One can recognise an ATP-grasp 1 domain in the interval Arg133–Val327. Positions 284, 298, and 300 each coordinate Mg(2+). Gln284, Glu298, and Asn300 together coordinate Mn(2+). An oligomerization domain region spans residues Leu402–Ser546. Residues Ile547–Gly929 are carbamoyl phosphate synthetic domain. In terms of domain architecture, ATP-grasp 2 spans Glu671–Leu861. Arg707, Arg746, Glu752, Gly777, Val778, His779, Ser780, Gln820, and Glu832 together coordinate ATP. The Mg(2+) site is built by Gln820, Glu832, and Asn834. Mn(2+) is bound by residues Gln820, Glu832, and Asn834. The region spanning Ile930–Ala1072 is the MGS-like domain. The allosteric domain stretch occupies residues Ile930–Ala1072.

It belongs to the CarB family. As to quaternary structure, composed of two chains; the small (or glutamine) chain promotes the hydrolysis of glutamine to ammonia, which is used by the large (or ammonia) chain to synthesize carbamoyl phosphate. Tetramer of heterodimers (alpha,beta)4. Requires Mg(2+) as cofactor. The cofactor is Mn(2+).

The catalysed reaction is hydrogencarbonate + L-glutamine + 2 ATP + H2O = carbamoyl phosphate + L-glutamate + 2 ADP + phosphate + 2 H(+). It catalyses the reaction hydrogencarbonate + NH4(+) + 2 ATP = carbamoyl phosphate + 2 ADP + phosphate + 2 H(+). It participates in amino-acid biosynthesis; L-arginine biosynthesis; carbamoyl phosphate from bicarbonate: step 1/1. Its pathway is pyrimidine metabolism; UMP biosynthesis via de novo pathway; (S)-dihydroorotate from bicarbonate: step 1/3. Functionally, large subunit of the glutamine-dependent carbamoyl phosphate synthetase (CPSase). CPSase catalyzes the formation of carbamoyl phosphate from the ammonia moiety of glutamine, carbonate, and phosphate donated by ATP, constituting the first step of 2 biosynthetic pathways, one leading to arginine and/or urea and the other to pyrimidine nucleotides. The large subunit (synthetase) binds the substrates ammonia (free or transferred from glutamine from the small subunit), hydrogencarbonate and ATP and carries out an ATP-coupled ligase reaction, activating hydrogencarbonate by forming carboxy phosphate which reacts with ammonia to form carbamoyl phosphate. The chain is Carbamoyl phosphate synthase large chain from Bacillus cereus (strain B4264).